Here is a 276-residue protein sequence, read N- to C-terminus: Dermonecrotic toxin LsaSicTox-alphaIB2iii (276 aa).

Histidine 5 is an active-site residue. Residues glutamate 25 and aspartate 27 each coordinate Mg(2+). The active-site Nucleophile is histidine 41. Cystine bridges form between cysteine 45–cysteine 51 and cysteine 47–cysteine 190. Aspartate 85 is a binding site for Mg(2+). N-linked (GlcNAc...) asparagine glycans are attached at residues asparagine 129 and asparagine 253.

Belongs to the arthropod phospholipase D family. Class II subfamily. Requires Mg(2+) as cofactor. In terms of tissue distribution, expressed by the venom gland.

Its subcellular location is the secreted. The enzyme catalyses an N-(acyl)-sphingosylphosphocholine = an N-(acyl)-sphingosyl-1,3-cyclic phosphate + choline. The catalysed reaction is an N-(acyl)-sphingosylphosphoethanolamine = an N-(acyl)-sphingosyl-1,3-cyclic phosphate + ethanolamine. It carries out the reaction a 1-acyl-sn-glycero-3-phosphocholine = a 1-acyl-sn-glycero-2,3-cyclic phosphate + choline. It catalyses the reaction a 1-acyl-sn-glycero-3-phosphoethanolamine = a 1-acyl-sn-glycero-2,3-cyclic phosphate + ethanolamine. Functionally, dermonecrotic toxins cleave the phosphodiester linkage between the phosphate and headgroup of certain phospholipids (sphingolipid and lysolipid substrates), forming an alcohol (often choline) and a cyclic phosphate. This toxin acts on sphingomyelin (SM). It may also act on ceramide phosphoethanolamine (CPE), lysophosphatidylcholine (LPC) and lysophosphatidylethanolamine (LPE), but not on lysophosphatidylserine (LPS), and lysophosphatidylglycerol (LPG). It acts by transphosphatidylation, releasing exclusively cyclic phosphate products as second products. Induces dermonecrosis, hemolysis, increased vascular permeability, edema, inflammatory response, and platelet aggregation. The chain is Dermonecrotic toxin LsaSicTox-alphaIB2iii from Loxosceles sabina (Tucson recluse spider).